An 85-amino-acid chain; its full sequence is Anti-neuroexcitation peptide 3 (85 aa).

The N-terminal stretch at Met1–Ala21 is a signal peptide. Positions Asp22 to Gly82 constitute an LCN-type CS-alpha/beta domain. 4 disulfides stabilise this stretch: Cys31–Cys81, Cys35–Cys56, Cys42–Cys63, and Cys46–Cys65.

Belongs to the long (4 C-C) scorpion toxin superfamily. Sodium channel inhibitor family. Beta subfamily. As to expression, expressed by the venom gland.

Its subcellular location is the secreted. Binds to sodium channels (Nav) and inhibits them. Recombinant ANEP delays the convulsion seizure of model animals by 18% and shows anti-neuroexcitatory activity. The sequence is that of Anti-neuroexcitation peptide 3 from Olivierus martensii (Manchurian scorpion).